The following is a 390-amino-acid chain: GTPase Obg (390 aa).

The region spanning 1–159 (MKFVDEATIK…RELRLELLLL (159 aa)) is the Obg domain. The region spanning 160–333 (ADVGMLGLPN…LCDELADFMD (174 aa)) is the OBG-type G domain. GTP-binding positions include 166–173 (GLPNAGKS), 191–195 (FTTLI), 213–216 (DIPG), 283–286 (NKTD), and 314–316 (AAV). Positions 173 and 193 each coordinate Mg(2+).

This sequence belongs to the TRAFAC class OBG-HflX-like GTPase superfamily. OBG GTPase family. As to quaternary structure, monomer. Mg(2+) serves as cofactor.

Its subcellular location is the cytoplasm. In terms of biological role, an essential GTPase which binds GTP, GDP and possibly (p)ppGpp with moderate affinity, with high nucleotide exchange rates and a fairly low GTP hydrolysis rate. Plays a role in control of the cell cycle, stress response, ribosome biogenesis and in those bacteria that undergo differentiation, in morphogenesis control. This chain is GTPase Obg, found in Aliivibrio fischeri (strain ATCC 700601 / ES114) (Vibrio fischeri).